A 315-amino-acid chain; its full sequence is L-threo-3-deoxy-hexylosonate aldolase (315 aa).

50-51 (SN) lines the substrate pocket. Lys-174 (schiff-base intermediate with substrate) is an active-site residue.

It belongs to the DapA family.

It catalyses the reaction 2-dehydro-3-deoxy-L-galactonate = L-glyceraldehyde + pyruvate. It participates in carbohydrate acid metabolism. Functionally, mediates the conversion of 2-dehydro-3-deoxy-L-galactonate to pyruvate and L-glyceraldehyde in D-galacturonate catabolic process. The chain is L-threo-3-deoxy-hexylosonate aldolase (lga1) from Hypocrea jecorina (Trichoderma reesei).